The chain runs to 169 residues: 2-C-methyl-D-erythritol 2,4-cyclodiphosphate synthase (169 aa).

A divalent metal cation contacts are provided by D13 and H15. Residues 13 to 15 (DVH) and 39 to 40 (HS) contribute to the 4-CDP-2-C-methyl-D-erythritol 2-phosphate site. H47 serves as a coordination point for a divalent metal cation. 4-CDP-2-C-methyl-D-erythritol 2-phosphate contacts are provided by residues 61–63 (DIG), 66–70 (FPDTD), F144, and R147.

This sequence belongs to the IspF family. In terms of assembly, homotrimer. The cofactor is a divalent metal cation.

It carries out the reaction 4-CDP-2-C-methyl-D-erythritol 2-phosphate = 2-C-methyl-D-erythritol 2,4-cyclic diphosphate + CMP. It participates in isoprenoid biosynthesis; isopentenyl diphosphate biosynthesis via DXP pathway; isopentenyl diphosphate from 1-deoxy-D-xylulose 5-phosphate: step 4/6. Its function is as follows. Involved in the biosynthesis of isopentenyl diphosphate (IPP) and dimethylallyl diphosphate (DMAPP), two major building blocks of isoprenoid compounds. Catalyzes the conversion of 4-diphosphocytidyl-2-C-methyl-D-erythritol 2-phosphate (CDP-ME2P) to 2-C-methyl-D-erythritol 2,4-cyclodiphosphate (ME-CPP) with a corresponding release of cytidine 5-monophosphate (CMP). This Cupriavidus necator (strain ATCC 17699 / DSM 428 / KCTC 22496 / NCIMB 10442 / H16 / Stanier 337) (Ralstonia eutropha) protein is 2-C-methyl-D-erythritol 2,4-cyclodiphosphate synthase.